Here is a 651-residue protein sequence, read N- to C-terminus: ATP synthase F(1) complex catalytic subunit beta, mitochondrial (651 aa).

The N-terminal 30 residues, 1–30 (MFVARRLSKNITQISKTAVKTSVRAVPVRG), are a transit peptide targeting the mitochondrion. 6 residues coordinate ADP: G259, V260, G261, K262, T263, and V264. Residue G259 participates in ATP binding. 5 residues coordinate phosphate: G259, V260, G261, K262, and T263. The ATP site is built by G261, K262, T263, and V264. T263 lines the Mg(2+) pocket. E288 is a Mg(2+) binding site. R289 is an ATP binding site.

This sequence belongs to the ATPase alpha/beta chains family. Homotrimer. Component of the ATP synthase complex composed at least of ATP5F1A/subunit alpha, ATP5F1B/subunit beta, ATP5MC1/subunit c (homooctomer), MT-ATP6/subunit a, MT-ATP8/subunit 8, ATP5ME/subunit e, ATP5MF/subunit f, ATP5MG/subunit g, ATP5MK/subunit k, ATP5MJ/subunit j, ATP5F1C/subunit gamma, ATP5F1D/subunit delta, ATP5F1E/subunit epsilon, ATP5PF/subunit F6, ATP5PB/subunit b, ATP5PD/subunit d, ATP5PO/subunit OSCP. ATP synthase complex consists of a soluble F(1) head domain (subunits alpha(3) and beta(3)) - the catalytic core - and a membrane F(0) domain - the membrane proton channel (subunits c, a, 8, e, f, g, k and j). These two domains are linked by a central stalk (subunits gamma, delta, and epsilon) rotating inside the F1 region and a stationary peripheral stalk (subunits F6, b, d, and OSCP).

The protein resides in the mitochondrion inner membrane. It carries out the reaction ATP + H2O + 4 H(+)(in) = ADP + phosphate + 5 H(+)(out). Its function is as follows. Catalytic subunit beta, of the mitochondrial membrane ATP synthase complex (F(1)F(0) ATP synthase or Complex V) that produces ATP from ADP in the presence of a proton gradient across the membrane which is generated by electron transport complexes of the respiratory chain. ATP synthase complex consist of a soluble F(1) head domain - the catalytic core - and a membrane F(1) domain - the membrane proton channel. These two domains are linked by a central stalk rotating inside the F(1) region and a stationary peripheral stalk. During catalysis, ATP synthesis in the catalytic domain of F(1) is coupled via a rotary mechanism of the central stalk subunits to proton translocation. In vivo, can only synthesize ATP although its ATP hydrolase activity can be activated artificially in vitro. With the subunit alpha (ATP5F1A), forms the catalytic core in the F(1) domain. The sequence is that of ATP synthase F(1) complex catalytic subunit beta, mitochondrial from Dictyostelium discoideum (Social amoeba).